Here is a 303-residue protein sequence, read N- to C-terminus: Coenzyme PQQ synthesis protein B (303 aa).

Belongs to the PqqB family.

The protein operates within cofactor biosynthesis; pyrroloquinoline quinone biosynthesis. Its function is as follows. May be involved in the transport of PQQ or its precursor to the periplasm. This Acinetobacter baumannii (strain AB0057) protein is Coenzyme PQQ synthesis protein B.